The primary structure comprises 50 residues: Large ribosomal subunit protein bL33A (50 aa).

The protein belongs to the bacterial ribosomal protein bL33 family.

The polypeptide is Large ribosomal subunit protein bL33A (Streptococcus thermophilus (strain CNRZ 1066)).